The primary structure comprises 247 residues: HTH-type transcriptional regulator SarU (247 aa).

DNA-binding regions (H-T-H motif) lie at residues 53–76 (LKEI…SLSK) and 178–201 (LKDL…RLNN).

This sequence belongs to the SarA family.

Its subcellular location is the cytoplasm. In terms of biological role, positive regulator of RNAII and RNAIII in a cell density-dependent manner. It can contribute to the expression of virulence genes controlled by agr. May also regulate target genes via an agr-independent pathway. This chain is HTH-type transcriptional regulator SarU (sarU), found in Staphylococcus aureus (strain NCTC 8325 / PS 47).